The primary structure comprises 271 residues: Ribosomal RNA small subunit methyltransferase A (271 aa).

Residues H14, L16, G41, E63, D89, and N107 each contribute to the S-adenosyl-L-methionine site.

Belongs to the class I-like SAM-binding methyltransferase superfamily. rRNA adenine N(6)-methyltransferase family. RsmA subfamily.

It is found in the cytoplasm. The catalysed reaction is adenosine(1518)/adenosine(1519) in 16S rRNA + 4 S-adenosyl-L-methionine = N(6)-dimethyladenosine(1518)/N(6)-dimethyladenosine(1519) in 16S rRNA + 4 S-adenosyl-L-homocysteine + 4 H(+). Specifically dimethylates two adjacent adenosines (A1518 and A1519) in the loop of a conserved hairpin near the 3'-end of 16S rRNA in the 30S particle. May play a critical role in biogenesis of 30S subunits. The polypeptide is Ribosomal RNA small subunit methyltransferase A (Lawsonia intracellularis (strain PHE/MN1-00)).